The following is a 655-amino-acid chain: p-hydroxybenzoic acid efflux pump subunit AaeB (655 aa).

10 consecutive transmembrane segments (helical) span residues 13–33, 38–58, 69–89, 93–113, 121–141, 152–172, 370–390, 407–427, 431–451, and 482–502; these read FAVK…HFQL, WAVL…GGEP, LRII…IAMI, LLMI…SSLV, WGLA…EPLL, EIVI…PRSI, LFWL…IAVV, FIYG…VIIP, QSML…GIEV, and FLDS…VILL.

This sequence belongs to the aromatic acid exporter ArAE (TC 2.A.85) family.

It is found in the cell inner membrane. Functionally, forms an efflux pump with AaeA. Could function as a metabolic relief valve, allowing to eliminate certain compounds when they accumulate to high levels in the cell. This chain is p-hydroxybenzoic acid efflux pump subunit AaeB, found in Shigella dysenteriae serotype 1 (strain Sd197).